The following is a 2472-amino-acid chain: Highly reducing polyketide synthase xilA (2472 aa).

The Ketosynthase family 3 (KS3) domain maps to 1-417 (MPGGVRDLPA…GTNGHCIIDD (417 aa)). Residues Cys162, His298, and His340 each act as for beta-ketoacyl synthase activity in the active site. Positions 442–502 (NDINGKSGTN…QRKHHHPKTD (61 aa)) are disordered. Over residues 450–489 (TNGANGANRVNGVNGVNGVNGVNGANGHSNASLLSNGSNN) the composition is skewed to low complexity. Positions 597 to 932 (FIFTGQGAQW…CTGTLFVHNV (336 aa)) constitute a Malonyl-CoA:ACP transacylase (MAT) domain. The segment at 991–1129 (HDLLGSKVPG…GQIKVEVAKF (139 aa)) is N-terminal hotdog fold. A PKS/mFAS DH domain is found at 991–1294 (HDLLGSKVPG…FTSLNNEQES (304 aa)). His1023 acts as the Proton acceptor; for dehydratase activity in catalysis. Residues 1141 to 1294 (GRLVDAQTWY…FTSLNNEQES (154 aa)) form a C-terminal hotdog fold region. Asp1207 acts as the Proton donor; for dehydratase activity in catalysis. The methyltransferase (CMeT) domain stretch occupies residues 1289-1505 (NNEQESPSTG…IITVHALRSI (217 aa)). An Enoyl reductase (ER) domain is found at 1724-2036 (GLLTSLYFKP…KGTHIGKMVI (313 aa)). The Ketoreductase (KR) domain occupies 2060–2239 (ASYILVGGLS…ATTVSLGFIK (180 aa)). The Carrier domain occupies 2391-2469 (ETVKLVSDAI…SIARVIVEEA (79 aa)). Ser2428 bears the O-(pantetheine 4'-phosphoryl)serine mark.

Pantetheine 4'-phosphate is required as a cofactor.

It participates in secondary metabolite biosynthesis. In terms of biological role, highly reducing polyketide synthase; part of the gene cluster that mediates the biosynthesis of the 6-methyl-2-pyrone derivative xylariolide D. XilA produces the 5-alkyl-6-methyl-2-pyrone backbone called prexylariolide D via sequential condensations of 4 malonyl-CoA units with one acetyl-CoA starter unit. During the biosynthesis, the linear polyketide chain is branched by the addition of an acetyl unit as the origin of the methyl group at the 2-pyrone ring. Prexylariolide D is then hydroxylated at the side chain by xilC to form the final product, xylariolide D. In Penicillium crustosum (Blue mold fungus), this protein is Highly reducing polyketide synthase xilA.